The primary structure comprises 794 residues: Signal transducer and activator of transcription 5A (794 aa).

The residue at position 90 (Tyr90) is a Phosphotyrosine. Phosphoserine is present on Ser128. The region spanning Trp589 to Val686 is the SH2 domain. Tyr682 is subject to Phosphotyrosine. Tyr694 bears the Phosphotyrosine; by JAK2 mark. The tract at residues Pro771–Ser794 is disordered.

It belongs to the transcription factor STAT family. In terms of assembly, forms a homodimer or a heterodimer with a related family member. Binds NR3C1. Interacts with NCOA1 and SOCS7. Interacts with ERBB4. Interacts with EBF4. Interacts with CD69. In terms of processing, ISGylated. Tyrosine phosphorylated in response to KITLG/SCF, IL2, IL3, IL7, IL15, CSF2/GMCSF, GH1, PRL, EPO and THPO. Activated KIT promotes phosphorylation on tyrosine residues and subsequent translocation to the nucleus. Tyrosine phosphorylated in response to constitutively activated FGFR1, FGFR2, FGFR3 and FGFR4. Tyrosine phosphorylation is required for DNA-binding activity and dimerization. Serine phosphorylation is also required for maximal transcriptional activity. Tyrosine phosphorylated in response to signaling via activated FLT3; wild-type FLT3 results in much weaker phosphorylation than constitutively activated mutant FLT3. Alternatively, can be phosphorylated by JAK2 at Tyr-694.

The protein resides in the cytoplasm. The protein localises to the nucleus. Functionally, carries out a dual function: signal transduction and activation of transcription. Mediates cellular responses to the cytokine KITLG/SCF and other growth factors. May mediate cellular responses to activated FGFR1, FGFR2, FGFR3 and FGFR4. Binds to the GAS element and activates PRL-induced transcription. Regulates the expression of milk proteins during lactation. This chain is Signal transducer and activator of transcription 5A (STAT5A), found in Bos taurus (Bovine).